We begin with the raw amino-acid sequence, 107 residues long: Inner membrane protein YiaW (107 aa).

Over 1–6 (MFLDYF) the chain is Cytoplasmic. Residues 7-29 (ALGVLIFVFLVIFYGIIILHDIP) form a helical membrane-spanning segment. Topologically, residues 30–43 (YLIAKKRNHPHADA) are periplasmic. Residues 44–66 (IHVAGWVSLFTLHVIWPFLWIWA) form a helical membrane-spanning segment. Over 67–107 (TLYRPERGWGMQSHDSSVMQLQQRIAGLEKQLADIKSSSAE) the chain is Cytoplasmic.

To E.coli YibI.

Its subcellular location is the cell inner membrane. The sequence is that of Inner membrane protein YiaW (yiaW) from Escherichia coli O157:H7.